Consider the following 328-residue polypeptide: MSRCIRQSVCTNFNVCRRQCFSTYASALKEMTHPIKPSAQTLRHLQFTQRIPFQKGLEIQETLVRANLDIKDIQSKIERKLIQLDEEYKGTATINDNEKRILDKVMAMKPNPIILTFEFEPTYTGGKRIKKTMTPDQIAAYESFIPETQKDNPRPKFVQVERGGQVTFHGPGQIVIYIILDLKTFQSFPAKCLVSCIEQATIRTLKNTKMCDDTDKPLNLDAMTTKDTGVWVENGKKKVASVGIHVRRSITSHGVAINVNTDLSYMNSFEMCGLKNTLTTSIMEQRPDAVVNVQSVAISFVKEMTKLLGIKTLERMQIDDVNILKKNP.

The region spanning 108-312 (MKPNPIILTF…EMTKLLGIKT (205 aa)) is the BPL/LPL catalytic domain. Substrate is bound by residues 162-169 (RGGQVTFH), 241-243 (SVG), and 254-256 (GVA). Catalysis depends on cysteine 272, which acts as the Acyl-thioester intermediate.

Belongs to the LipB family.

The protein resides in the mitochondrion. The catalysed reaction is octanoyl-[ACP] + L-lysyl-[protein] = N(6)-octanoyl-L-lysyl-[protein] + holo-[ACP] + H(+). The protein operates within protein modification; protein lipoylation via endogenous pathway; protein N(6)-(lipoyl)lysine from octanoyl-[acyl-carrier-protein]: step 1/2. Catalyzes the transfer of endogenously produced octanoic acid from octanoyl-acyl-carrier-protein onto the lipoyl domains of lipoate-dependent enzymes. Lipoyl-ACP can also act as a substrate although octanoyl-ACP is likely to be the physiological substrate. This Saccharomyces cerevisiae (strain ATCC 204508 / S288c) (Baker's yeast) protein is Octanoyltransferase, mitochondrial (LIP2).